A 279-amino-acid chain; its full sequence is Ribosomal RNA small subunit methyltransferase A (279 aa).

S-adenosyl-L-methionine-binding residues include His-12, Leu-14, Gly-39, Glu-60, Asp-81, and Asn-118.

The protein belongs to the class I-like SAM-binding methyltransferase superfamily. rRNA adenine N(6)-methyltransferase family. RsmA subfamily.

Its subcellular location is the cytoplasm. The catalysed reaction is adenosine(1518)/adenosine(1519) in 16S rRNA + 4 S-adenosyl-L-methionine = N(6)-dimethyladenosine(1518)/N(6)-dimethyladenosine(1519) in 16S rRNA + 4 S-adenosyl-L-homocysteine + 4 H(+). Functionally, specifically dimethylates two adjacent adenosines (A1518 and A1519) in the loop of a conserved hairpin near the 3'-end of 16S rRNA in the 30S particle. May play a critical role in biogenesis of 30S subunits. The sequence is that of Ribosomal RNA small subunit methyltransferase A from Polaromonas naphthalenivorans (strain CJ2).